A 307-amino-acid polypeptide reads, in one-letter code: MTVTAAMVKELREKTGAGMMDCKKALAETNGDMEAAIDWLRAKGIAKADKKSGRTAAEGLIGIASSGTKAVVVEINSETDFVARNDAFQELVRGVANVALGTDGSVAAVSKATYPATGKSVEDTIKDAIATIGENMTLRRSALLEVEDGVVATYVHNAAGEGIGKLGVLVALKSTGDKEALNAIGRQVAMHVAATNPLAVRSSEIDPAVAERERNVFIEQSRASGKPDNIIEKMVDGRMRKFFEEVALLSQAFVMNPDQTVEAAIKEAEKSVGAPIEVAGIARLLLGEGVEKEESDFAAEVAAAAKG.

The involved in Mg(2+) ion dislocation from EF-Tu stretch occupies residues 79–82 (TDFV).

Belongs to the EF-Ts family.

It localises to the cytoplasm. Its function is as follows. Associates with the EF-Tu.GDP complex and induces the exchange of GDP to GTP. It remains bound to the aminoacyl-tRNA.EF-Tu.GTP complex up to the GTP hydrolysis stage on the ribosome. The chain is Elongation factor Ts from Rhizobium meliloti (strain 1021) (Ensifer meliloti).